The chain runs to 258 residues: Ubiquinone/menaquinone biosynthesis C-methyltransferase UbiE (258 aa).

Residues threonine 81, aspartate 102, and 130 to 131 (NA) each bind S-adenosyl-L-methionine.

It belongs to the class I-like SAM-binding methyltransferase superfamily. MenG/UbiE family.

The catalysed reaction is a 2-demethylmenaquinol + S-adenosyl-L-methionine = a menaquinol + S-adenosyl-L-homocysteine + H(+). It catalyses the reaction a 2-methoxy-6-(all-trans-polyprenyl)benzene-1,4-diol + S-adenosyl-L-methionine = a 5-methoxy-2-methyl-3-(all-trans-polyprenyl)benzene-1,4-diol + S-adenosyl-L-homocysteine + H(+). It participates in quinol/quinone metabolism; menaquinone biosynthesis; menaquinol from 1,4-dihydroxy-2-naphthoate: step 2/2. Its pathway is cofactor biosynthesis; ubiquinone biosynthesis. In terms of biological role, methyltransferase required for the conversion of demethylmenaquinol (DMKH2) to menaquinol (MKH2) and the conversion of 2-polyprenyl-6-methoxy-1,4-benzoquinol (DDMQH2) to 2-polyprenyl-3-methyl-6-methoxy-1,4-benzoquinol (DMQH2). The polypeptide is Ubiquinone/menaquinone biosynthesis C-methyltransferase UbiE (Rhizobium meliloti (strain 1021) (Ensifer meliloti)).